We begin with the raw amino-acid sequence, 561 residues long: uncharacterized protein (561 aa).

Disordered stretches follow at residues 369-390 (SVPE…LSKG) and 429-515 (EGLG…GESE). Phosphoserine is present on serine 383. Residues 465-503 (NISPESSRFGTPSDPNSSSQSLGNEVLSRPNSNSNSAES) are compositionally biased toward polar residues.

This is an uncharacterized protein from Schizosaccharomyces pombe (strain 972 / ATCC 24843) (Fission yeast).